The following is a 313-amino-acid chain: Ribosomal RNA small subunit methyltransferase H (313 aa).

S-adenosyl-L-methionine is bound by residues 35-37 (GGH), aspartate 55, phenylalanine 79, aspartate 100, and glutamine 107.

The protein belongs to the methyltransferase superfamily. RsmH family.

It is found in the cytoplasm. The catalysed reaction is cytidine(1402) in 16S rRNA + S-adenosyl-L-methionine = N(4)-methylcytidine(1402) in 16S rRNA + S-adenosyl-L-homocysteine + H(+). Functionally, specifically methylates the N4 position of cytidine in position 1402 (C1402) of 16S rRNA. The sequence is that of Ribosomal RNA small subunit methyltransferase H from Burkholderia multivorans (strain ATCC 17616 / 249).